A 1334-amino-acid chain; its full sequence is Aldehyde oxidase 4 (1334 aa).

The 2Fe-2S ferredoxin-type domain maps to 6-93 (DELIFFVNGK…GAAVTTVEGV (88 aa)). [2Fe-2S] cluster contacts are provided by Cys-45, Cys-50, Cys-53, and Cys-75. Gln-114 contacts Mo-molybdopterin. Positions 115, 118, 150, and 152 each coordinate [2Fe-2S] cluster. Cys-152 lines the Mo-molybdopterin pocket. One can recognise an FAD-binding PCMH-type domain in the interval 235–421 (FQGERTIWIM…LSVFIPYSGQ (187 aa)). Residues 263–270 (LVMGNTAV), Ala-345, Thr-354, His-358, Asp-367, and Ala-411 each bind FAD. Mo-molybdopterin is bound by residues Ala-802, 802-803 (AF), Leu-1043, 1084-1087 (GSMG), Gln-1199, and Leu-1263. Glu-1265 functions as the Proton acceptor; for azaheterocycle hydroxylase activity in the catalytic mechanism.

The protein belongs to the xanthine dehydrogenase family. As to quaternary structure, homodimer. [2Fe-2S] cluster serves as cofactor. The cofactor is FAD. Mo-molybdopterin is required as a cofactor.

The protein resides in the cytoplasm. It carries out the reaction an aldehyde + O2 + H2O = a carboxylate + H2O2 + H(+). It catalyses the reaction retinal + O2 + H2O = retinoate + H2O2 + H(+). In terms of biological role, aldehyde oxidase able to catalyze the oxidation of retinaldehyde into retinoate. Acts as a negative modulator of the epidermal trophism. May be able to oxidize a wide variety of aldehydes into their corresponding carboxylates and to hydroxylate azaheterocycles. The sequence is that of Aldehyde oxidase 4 (Aox4) from Rattus norvegicus (Rat).